The sequence spans 328 residues: Phosphate acyltransferase (328 aa).

This sequence belongs to the PlsX family. As to quaternary structure, homodimer. Probably interacts with PlsY.

It localises to the cytoplasm. It catalyses the reaction a fatty acyl-[ACP] + phosphate = an acyl phosphate + holo-[ACP]. It functions in the pathway lipid metabolism; phospholipid metabolism. Functionally, catalyzes the reversible formation of acyl-phosphate (acyl-PO(4)) from acyl-[acyl-carrier-protein] (acyl-ACP). This enzyme utilizes acyl-ACP as fatty acyl donor, but not acyl-CoA. The polypeptide is Phosphate acyltransferase (Staphylococcus aureus (strain bovine RF122 / ET3-1)).